We begin with the raw amino-acid sequence, 462 residues long: UDP-N-acetylmuramoylalanine--D-glutamate ligase (462 aa).

118-124 lines the ATP pocket; it reads GTNGKST.

The protein belongs to the MurCDEF family.

The protein resides in the cytoplasm. It catalyses the reaction UDP-N-acetyl-alpha-D-muramoyl-L-alanine + D-glutamate + ATP = UDP-N-acetyl-alpha-D-muramoyl-L-alanyl-D-glutamate + ADP + phosphate + H(+). It participates in cell wall biogenesis; peptidoglycan biosynthesis. Functionally, cell wall formation. Catalyzes the addition of glutamate to the nucleotide precursor UDP-N-acetylmuramoyl-L-alanine (UMA). The polypeptide is UDP-N-acetylmuramoylalanine--D-glutamate ligase (Anaeromyxobacter dehalogenans (strain 2CP-C)).